We begin with the raw amino-acid sequence, 492 residues long: MASPSGKGARALEAPGCGPRPLARDLVDSVDDAEGLYVAVERCPLCNTTRRRLTCAKCVQSGDFVYFDGRDRERFIDKKERLSRLKSKQEEFQKEVLKAMEGKWITDQLRWKIMSCKMRIEQLKQTICKGNEEMEKNSEGLLKTKEKNQKLYSRAQRHQEKKEKIQRHNRKLGDLVEKKTIDLRSHYERLANLRRSHILELTSVIFPIEEVKTGVRDPADVSSESDSAMTSSTVSKLAEARRTTYLSGRWVCDDHNGDTSISITGPWISLPNNGDYSAYYSWVEEKKTTQGPDMEQSNPAYTISAALCYATQLVNILSHILDVNLPKKLCNSEFCGENLSKQKFTRAVKKLNANILYLCFSQHVNLDQLQPLHTLRNLMYLVSPSSEHLGRSGPFEVRADLEESMEFVDPGVAGESDESGDERVSDEETDLGTDWENLPSPRFCDIPSQSVEVSQSQSTQASPPIASSSAGGMISSAAASVTSWFKAYTGHR.

A Phosphoserine modification is found at Ser-29. Residues 43-58 are cysteine repeats; sequence CPLCNTTRRRLTCAKC. Residues 71–180 are a coiled coil; the sequence is DRERFIDKKE…KLGDLVEKKT (110 aa). Positions 410 to 473 are disordered; the sequence is PGVAGESDES…PIASSSAGGM (64 aa). The segment at 413 to 492 is BATS; it reads AGESDESGDE…SWFKAYTGHR (80 aa). Residues 415–433 show a composition bias toward acidic residues; the sequence is ESDESGDERVSDEETDLGT. At Ser-416 the chain carries Phosphoserine. Thr-429 bears the Phosphothreonine mark. A compositionally biased stretch (low complexity) spans 448-473; sequence SQSVEVSQSQSTQASPPIASSSAGGM.

Belongs to the ATG14 family. Forms homooligomers; homo-oligomerization is essential for the roles in membrane tethering and enhancement of SNARE-mediated fusion. Component of the PI3K (PI3KC3/PI3K-III/class III phosphatidylinositol 3-kinase) complex I (PI3KC3-C1) in which the core composed of the catalytic subunit PIK3C3, the regulatory subunit PIK3R4 and BECN1 is associated with ATG14. PI3KC3-C1 displays a V-shaped architecture with PIK3R4 serving as a bridge between PIK3C3 and the ATG14:BECN1 subcomplex. PI3KC3-C1 can associate with further regulatory subunits. Interacts with PIK3CB. Interacts (via coiled-coil domain) with BECN2 (via coiled-coil domain); this interaction is tighter than BECN2 self-association. Interacts with the STX17-SNAP29 binary t-SNARE complex. Interacts with NRBF2. Interacts with PIK3C3 and BECN1; this interaction is increased in the absence of TMEM39A. Interacts with STEEP1; the interaction is required for trafficking of STING1 from the endoplasmic reticulum. Interacts with ARMC3 (via ARM domains). Post-translationally, ubiquitinated via 'Lys-6', 'Lys-11' and 'Lys-63'-linked polyubiquitin chains on multiple lysines by MARCHF7, leading to ATG14 aggregation and loss of interaction with STX17.

The protein localises to the cytoplasm. The protein resides in the endoplasmic reticulum membrane. It localises to the preautophagosomal structure membrane. It is found in the cytoplasmic vesicle. Its subcellular location is the autophagosome membrane. Required for both basal and inducible autophagy. Determines the localization of the autophagy-specific PI3-kinase complex PI3KC3-C1. Plays a role in autophagosome formation and MAP1LC3/LC3 conjugation to phosphatidylethanolamine. Promotes BECN1 translocation from the trans-Golgi network to autophagosomes. Enhances PIK3C3 activity in a BECN1-dependent manner. Essential for the autophagy-dependent phosphorylation of BECN1. Stimulates the phosphorylation of BECN1, but suppresses the phosphorylation PIK3C3 by AMPK. Binds to STX17-SNAP29 binary t-SNARE complex on autophagosomes and primes it for VAMP8 interaction to promote autophagosome-endolysosome fusion. Modulates the hepatic lipid metabolism. This Homo sapiens (Human) protein is Beclin 1-associated autophagy-related key regulator.